We begin with the raw amino-acid sequence, 880 residues long: DNA mismatch repair protein MutS (880 aa).

625–632 (GPNMAGKS) lines the ATP pocket.

It belongs to the DNA mismatch repair MutS family.

This protein is involved in the repair of mismatches in DNA. It is possible that it carries out the mismatch recognition step. This protein has a weak ATPase activity. This Alkaliphilus oremlandii (strain OhILAs) (Clostridium oremlandii (strain OhILAs)) protein is DNA mismatch repair protein MutS.